A 106-amino-acid polypeptide reads, in one-letter code: Ferredoxin-2 (106 aa).

4Fe-4S ferredoxin-type domains are found at residues 2–29 (YVVTENCIKCKYQDCVEVCPVDCFYEGE) and 30–59 (NFLVINPDECIDCGVCNPECPAEAIAGKWL). The [3Fe-4S] cluster site is built by cysteine 8 and cysteine 16. Cysteine 20, cysteine 39, cysteine 42, and cysteine 45 together coordinate [4Fe-4S] cluster. Cysteine 49 contacts [3Fe-4S] cluster. The interval 80 to 106 (ADADDWKDKPDKTGLLSENPGKGTVCH) is disordered.

[4Fe-4S] cluster serves as cofactor. It depends on [3Fe-4S] cluster as a cofactor.

Its function is as follows. Ferredoxins are iron-sulfur proteins that transfer electrons in a wide variety of metabolic reactions. This is Ferredoxin-2 from Rhodospirillum rubrum.